The sequence spans 307 residues: 4-hydroxy-3-methylbut-2-enyl diphosphate reductase (307 aa).

Cys-13 contacts [4Fe-4S] cluster. (2E)-4-hydroxy-3-methylbut-2-enyl diphosphate contacts are provided by His-42 and His-75. Dimethylallyl diphosphate-binding residues include His-42 and His-75. Positions 42 and 75 each coordinate isopentenyl diphosphate. Position 97 (Cys-97) interacts with [4Fe-4S] cluster. His-125 is a (2E)-4-hydroxy-3-methylbut-2-enyl diphosphate binding site. His-125 lines the dimethylallyl diphosphate pocket. His-125 is a binding site for isopentenyl diphosphate. Glu-127 (proton donor) is an active-site residue. Thr-165 serves as a coordination point for (2E)-4-hydroxy-3-methylbut-2-enyl diphosphate. Cys-195 is a [4Fe-4S] cluster binding site. The (2E)-4-hydroxy-3-methylbut-2-enyl diphosphate site is built by Ser-223, Ser-224, Asn-225, and Ser-267. Dimethylallyl diphosphate-binding residues include Ser-223, Ser-224, Asn-225, and Ser-267. The isopentenyl diphosphate site is built by Ser-223, Ser-224, Asn-225, and Ser-267.

This sequence belongs to the IspH family. [4Fe-4S] cluster serves as cofactor.

It catalyses the reaction isopentenyl diphosphate + 2 oxidized [2Fe-2S]-[ferredoxin] + H2O = (2E)-4-hydroxy-3-methylbut-2-enyl diphosphate + 2 reduced [2Fe-2S]-[ferredoxin] + 2 H(+). It carries out the reaction dimethylallyl diphosphate + 2 oxidized [2Fe-2S]-[ferredoxin] + H2O = (2E)-4-hydroxy-3-methylbut-2-enyl diphosphate + 2 reduced [2Fe-2S]-[ferredoxin] + 2 H(+). The protein operates within isoprenoid biosynthesis; dimethylallyl diphosphate biosynthesis; dimethylallyl diphosphate from (2E)-4-hydroxy-3-methylbutenyl diphosphate: step 1/1. It participates in isoprenoid biosynthesis; isopentenyl diphosphate biosynthesis via DXP pathway; isopentenyl diphosphate from 1-deoxy-D-xylulose 5-phosphate: step 6/6. In terms of biological role, catalyzes the conversion of 1-hydroxy-2-methyl-2-(E)-butenyl 4-diphosphate (HMBPP) into a mixture of isopentenyl diphosphate (IPP) and dimethylallyl diphosphate (DMAPP). Acts in the terminal step of the DOXP/MEP pathway for isoprenoid precursor biosynthesis. This chain is 4-hydroxy-3-methylbut-2-enyl diphosphate reductase, found in Chlamydia trachomatis serovar D (strain ATCC VR-885 / DSM 19411 / UW-3/Cx).